The chain runs to 402 residues: Lipid-A-disaccharide synthase (402 aa).

It belongs to the LpxB family.

The enzyme catalyses a lipid X + a UDP-2-N,3-O-bis[(3R)-3-hydroxyacyl]-alpha-D-glucosamine = a lipid A disaccharide + UDP + H(+). It participates in bacterial outer membrane biogenesis; LPS lipid A biosynthesis. Functionally, condensation of UDP-2,3-diacylglucosamine and 2,3-diacylglucosamine-1-phosphate to form lipid A disaccharide, a precursor of lipid A, a phosphorylated glycolipid that anchors the lipopolysaccharide to the outer membrane of the cell. This Cupriavidus pinatubonensis (strain JMP 134 / LMG 1197) (Cupriavidus necator (strain JMP 134)) protein is Lipid-A-disaccharide synthase.